Consider the following 598-residue polypeptide: Nuclear receptor subfamily 4 group A member 2 (598 aa).

The segment at 1-22 (MPCVQAQYGSSPQGASPASQSY) is disordered. Residues 8 to 22 (YGSSPQGASPASQSY) are compositionally biased toward low complexity. The nuclear receptor DNA-binding region spans 260–335 (EGLCAVCGDN…VGMVKEVVRT (76 aa)). 2 NR C4-type zinc fingers span residues 263 to 283 (CAVC…CEGC) and 299 to 323 (CLAN…FQKC). Positions 287-314 (FKRTVQKNAKYVCLANKNCPVDKRRRNR) match the Bipartite nuclear localization signal (NLS1) motif. The segment at 337–361 (SLKGRRGRLPSKPKSPQEPSPPSPP) is disordered. The Nuclear localization signal (NLS1) signature appears at 338–350 (LKGRRGRLPSKPK). Over residues 352–361 (PQEPSPPSPP) the composition is skewed to pro residues. The NR LBD domain maps to 360–595 (PPVSLISALV…AIIDKLFLDT (236 aa)). The nuclear export sequence (NES1) motif lies at 443 to 452 (FLELFVLRLA). Residues 568 to 577 (QGLQRIFYLK) carry the nuclear export sequence (NES2) motif.

This sequence belongs to the nuclear hormone receptor family. NR4 subfamily. In terms of assembly, interacts with SFPQ, NCOR2, SIN3A and HADC1. The interaction with NCOR2 increases in the absence of PITX3. Interacts with PER2. In terms of tissue distribution, expressed in a number of cell lines of T-cell, B-cell and fibroblast origin. Strong expression in brain tissue.

It localises to the cytoplasm. Its subcellular location is the nucleus. In terms of biological role, transcriptional regulator which is important for the differentiation and maintenance of meso-diencephalic dopaminergic (mdDA) neurons during development. It is crucial for expression of a set of genes such as SLC6A3, SLC18A2, TH and DRD2 which are essential for development of mdDA neurons. The sequence is that of Nuclear receptor subfamily 4 group A member 2 (NR4A2) from Homo sapiens (Human).